The primary structure comprises 221 residues: Protein Pisl_1005 (221 aa).

Residues Glu-8–Glu-201 enclose the AMMECR1 domain.

The polypeptide is Protein Pisl_1005 (Pyrobaculum islandicum (strain DSM 4184 / JCM 9189 / GEO3)).